A 336-amino-acid polypeptide reads, in one-letter code: Fructose-1,6-bisphosphatase class 1 (336 aa).

Mg(2+) is bound by residues Glu-90, Asp-112, Leu-114, and Asp-115. Substrate contacts are provided by residues 115–118, Asn-211, and Lys-277; that span reads DGSS. Glu-283 contacts Mg(2+).

This sequence belongs to the FBPase class 1 family. In terms of assembly, homotetramer. The cofactor is Mg(2+).

The protein localises to the cytoplasm. The enzyme catalyses beta-D-fructose 1,6-bisphosphate + H2O = beta-D-fructose 6-phosphate + phosphate. The protein operates within carbohydrate biosynthesis; gluconeogenesis. This Pseudomonas aeruginosa (strain ATCC 15692 / DSM 22644 / CIP 104116 / JCM 14847 / LMG 12228 / 1C / PRS 101 / PAO1) protein is Fructose-1,6-bisphosphatase class 1.